We begin with the raw amino-acid sequence, 87 residues long: Spermatid-specific protein S1 (87 aa).

A disordered region spans residues 1–36 (TKSRYRNRRSRPRRRYGRRMRKTRCRRKGRRISRRP).

It is found in the nucleus. The protein localises to the chromosome. Involved in nuclear basic protein transition: histones are replaced by spermatid specific proteins which are themselves replaced by protamines in late spermatids. In Scyliorhinus canicula (Small-spotted catshark), this protein is Spermatid-specific protein S1.